The primary structure comprises 187 residues: UPF0398 protein MW1336 (187 aa).

It belongs to the UPF0398 family.

This chain is UPF0398 protein MW1336, found in Staphylococcus aureus (strain MW2).